The following is a 294-amino-acid chain: Ribosomal RNA small subunit methyltransferase A (294 aa).

Positions 33, 35, 60, 81, 106, and 131 each coordinate S-adenosyl-L-methionine.

This sequence belongs to the class I-like SAM-binding methyltransferase superfamily. rRNA adenine N(6)-methyltransferase family. RsmA subfamily.

It localises to the cytoplasm. The enzyme catalyses adenosine(1518)/adenosine(1519) in 16S rRNA + 4 S-adenosyl-L-methionine = N(6)-dimethyladenosine(1518)/N(6)-dimethyladenosine(1519) in 16S rRNA + 4 S-adenosyl-L-homocysteine + 4 H(+). In terms of biological role, specifically dimethylates two adjacent adenosines (A1518 and A1519) in the loop of a conserved hairpin near the 3'-end of 16S rRNA in the 30S particle. May play a critical role in biogenesis of 30S subunits. The polypeptide is Ribosomal RNA small subunit methyltransferase A (Lactococcus lactis subsp. lactis (strain IL1403) (Streptococcus lactis)).